We begin with the raw amino-acid sequence, 1456 residues long: Macrophage mannose receptor 1 (1456 aa).

The N-terminal stretch at 1 to 18 (MRLPLLLVFASVIPGAVL) is a signal peptide. Over 19 to 1389 (LLDTRQFLIY…DPSKPSSNVA (1371 aa)) the chain is Extracellular. One can recognise a Ricin B-type lectin domain in the interval 22–142 (TRQFLIYNED…SGLWSRWKIY (121 aa)). Cystine bridges form between Cys35–Cys49 and Cys74–Cys91. An N-linked (GlcNAc...) asparagine glycan is attached at Asn104. Residues 163-211 (ANGATCAFPFKFENKWYADCTSAGRSDGWLWCGTTTDYDTDKLFGYCPL) enclose the Fibronectin type-II domain. 4 cysteine pairs are disulfide-bonded: Cys168-Cys194, Cys182-Cys209, Cys247-Cys340, and Cys316-Cys332. One can recognise a C-type lectin 1 domain in the interval 225 to 341 (LTSVSYQINS…CVQKLGYICK (117 aa)). A glycan (N-linked (GlcNAc...) asparagine) is linked at Asn344. 4 consecutive C-type lectin domains span residues 369–487 (YAGH…YICK), 511–626 (HHFY…FVCK), 655–778 (RTSL…WICQ), and 807–923 (YKDY…FICQ). Cystine bridges form between Cys391–Cys486 and Cys463–Cys478. A glycan (N-linked (GlcNAc...) asparagine) is linked at Asn529. 7 disulfide bridges follow: Cys532-Cys625, Cys600-Cys617, Cys646-Cys659, Cys680-Cys777, Cys753-Cys769, Cys828-Cys922, and Cys899-Cys914. N-linked (GlcNAc...) asparagine glycans are attached at residues Asn926 and Asn930. 3 consecutive C-type lectin domains span residues 952–1080 (YSNK…YICQ), 1102–1213 (YGKS…FLCK), and 1241–1356 (FHGH…YICK). 6 cysteine pairs are disulfide-bonded: Cys977/Cys1079, Cys1052/Cys1071, Cys1123/Cys1212, Cys1190/Cys1204, Cys1263/Cys1355, and Cys1332/Cys1347. N-linked (GlcNAc...) asparagine glycosylation occurs at Asn1160. Asn1205 is a glycosylation site (N-linked (GlcNAc...) asparagine). Residues 1390-1410 (GVVIIVILLILTGAGLAAYFF) traverse the membrane as a helical segment. Residues 1411-1456 (YKKRRVHLPQEGAFENTLYFNSQSSPGTSDMKDLVGNIEQNEHSVI) lie on the Cytoplasmic side of the membrane.

(Microbial infection) Interacts with Dengue virus. As to quaternary structure, (Microbial infection) May act as a receptor for hepatitis B virus, enabling uptake of the virus in hepatic dendritic cells.

It localises to the endosome membrane. The protein localises to the cell membrane. Mediates the endocytosis of glycoproteins by macrophages. Binds both sulfated and non-sulfated polysaccharide chains. Functionally, (Microbial infection) Acts as a phagocytic receptor for bacteria, fungi and other pathogens. In terms of biological role, (Microbial infection) Acts as a receptor for Dengue virus envelope protein E. Its function is as follows. (Microbial infection) Interacts with Hepatitis B virus envelope protein. The polypeptide is Macrophage mannose receptor 1 (MRC1) (Homo sapiens (Human)).